A 50-amino-acid chain; its full sequence is Large ribosomal subunit protein bL33B (50 aa).

This sequence belongs to the bacterial ribosomal protein bL33 family.

The chain is Large ribosomal subunit protein bL33B from Streptococcus agalactiae serotype V (strain ATCC BAA-611 / 2603 V/R).